A 248-amino-acid polypeptide reads, in one-letter code: Pyruvate formate-lyase-activating enzyme (248 aa).

The 232-residue stretch at V17–K248 folds into the Radical SAM core domain. [4Fe-4S] cluster contacts are provided by C31, C35, and C38. S-adenosyl-L-methionine is bound by residues F37–H39, G80, D135–K137, and H208.

This sequence belongs to the organic radical-activating enzymes family. Requires [4Fe-4S] cluster as cofactor.

Its subcellular location is the cytoplasm. It carries out the reaction glycyl-[formate C-acetyltransferase] + reduced [flavodoxin] + S-adenosyl-L-methionine = glycin-2-yl radical-[formate C-acetyltransferase] + semiquinone [flavodoxin] + 5'-deoxyadenosine + L-methionine + H(+). Functionally, activation of pyruvate formate-lyase under anaerobic conditions by generation of an organic free radical, using S-adenosylmethionine and reduced flavodoxin as cosubstrates to produce 5'-deoxy-adenosine. The sequence is that of Pyruvate formate-lyase-activating enzyme (pflA) from Listeria innocua serovar 6a (strain ATCC BAA-680 / CLIP 11262).